The following is a 49-amino-acid chain: Large ribosomal subunit protein bL33A (49 aa).

It belongs to the bacterial ribosomal protein bL33 family.

The polypeptide is Large ribosomal subunit protein bL33A (Staphylococcus haemolyticus (strain JCSC1435)).